We begin with the raw amino-acid sequence, 66 residues long: Small vasohibin-binding protein (66 aa).

A compositionally biased stretch (basic and acidic residues) spans M1–K23. Residues M1 to K32 form a disordered region. A coiled-coil region spans residues A5–Q52.

It belongs to the SVBP family. As to quaternary structure, interacts with VASH1 and VASH2.

The protein localises to the cytoplasm. The protein resides in the secreted. It localises to the cytoskeleton. Functionally, enhances the tyrosine carboxypeptidase activity of VASH1 and VASH2, thereby promoting the removal of the C-terminal tyrosine residue of alpha-tubulin. Also required to enhance the solubility and secretion of VASH1 and VASH2. Plays a role in axon and excitatory synapse formation. This is Small vasohibin-binding protein from Bos taurus (Bovine).